The chain runs to 360 residues: Photosystem II protein D1 (360 aa).

3 consecutive transmembrane segments (helical) span residues 29-46 (YIGW…TATS), 118-133 (HFLL…EWEL), and 142-156 (WIFV…AASA). Residue H118 participates in chlorophyll a binding. Residue Y126 participates in pheophytin a binding. Residues D170 and E189 each contribute to the [CaMn4O5] cluster site. Residues 197-218 (FHMAGVAGVFGGSLFSAMHGSL) form a helical membrane-spanning segment. H198 is a chlorophyll a binding site. A quinone contacts are provided by residues H215 and 264 to 265 (SF). H215 provides a ligand contact to Fe cation. H272 is a Fe cation binding site. The chain crosses the membrane as a helical span at residues 274–288 (FLAAWPVVGIWLTAM). The [CaMn4O5] cluster site is built by H332, E333, D342, and A344. Positions 345 to 360 (SGDVLPVALNAPAVNG) are excised as a propeptide.

Belongs to the reaction center PufL/M/PsbA/D family. As to quaternary structure, PSII is composed of 1 copy each of membrane proteins PsbA, PsbB, PsbC, PsbD, PsbE, PsbF, PsbH, PsbI, PsbJ, PsbK, PsbL, PsbM, PsbT, PsbX, PsbY, PsbZ, Psb30/Ycf12, at least 3 peripheral proteins of the oxygen-evolving complex and a large number of cofactors. It forms dimeric complexes. The cofactor is The D1/D2 heterodimer binds P680, chlorophylls that are the primary electron donor of PSII, and subsequent electron acceptors. It shares a non-heme iron and each subunit binds pheophytin, quinone, additional chlorophylls, carotenoids and lipids. D1 provides most of the ligands for the Mn4-Ca-O5 cluster of the oxygen-evolving complex (OEC). There is also a Cl(-1) ion associated with D1 and D2, which is required for oxygen evolution. The PSII complex binds additional chlorophylls, carotenoids and specific lipids.. Post-translationally, tyr-161 forms a radical intermediate that is referred to as redox-active TyrZ, YZ or Y-Z. C-terminally processed by CTPA; processing is essential to allow assembly of the oxygen-evolving complex and thus photosynthetic growth.

The protein resides in the plastid. It is found in the chloroplast thylakoid membrane. It carries out the reaction 2 a plastoquinone + 4 hnu + 2 H2O = 2 a plastoquinol + O2. In terms of biological role, photosystem II (PSII) is a light-driven water:plastoquinone oxidoreductase that uses light energy to abstract electrons from H(2)O, generating O(2) and a proton gradient subsequently used for ATP formation. It consists of a core antenna complex that captures photons, and an electron transfer chain that converts photonic excitation into a charge separation. The D1/D2 (PsbA/PsbD) reaction center heterodimer binds P680, the primary electron donor of PSII as well as several subsequent electron acceptors. This is Photosystem II protein D1 from Trieres chinensis (Marine centric diatom).